The primary structure comprises 1325 residues: Protein suppressor of sable (1325 aa).

2 disordered regions span residues 1–36 (MSVALADEPLIDLEEDLEDGEIDDDEEDEQQSSKIQ) and 74–326 (VCLQ…GGSN). Over residues 9-30 (PLIDLEEDLEDGEIDDDEEDEQ) the composition is skewed to acidic residues. Polar residues predominate over residues 119–131 (RSSNQDTSDQSLE). Residues 138–327 (ATANPLLQST…GQEKMGGSNR (190 aa)) form a highly charged region. The segment covering 149–158 (SSRRRKRKKE) has biased composition (basic residues). A coiled-coil region spans residues 149-179 (SSRRRKRKKEREREQKKDKEQQNRSRRDEND). Residues 159-178 (REREQKKDKEQQNRSRRDEN) are compositionally biased toward basic and acidic residues. The segment covering 236-246 (AGLGAGGGGGY) has biased composition (gly residues). Positions 276–296 (NEKEHQRGVNNRKRRDRDRLE) form a coiled coil. 2 consecutive C3H1-type zinc fingers follow at residues 330-357 (PRKLELCKFYLMDCCAKRDKCSYMHKEF) and 358-381 (PCKYYYLGMDCYAGDDCLFYHGEP). Positions 444 to 478 (KRQDHQMQQQQQQLQHQQLQQQQEQQQTQQQAAAD) form a coiled coil. Over residues 499–509 (KRKSRWTEKMG) the composition is skewed to basic and acidic residues. Disordered regions lie at residues 499–535 (KRKSRWTEKMGAKAAAGAAGSSERDSTSPDAKPLPPH), 588–622 (KAEDAKPQTQAELESSTPPSKRETEANNSNSKSNG), 639–695 (FSGN…PSVF), 710–745 (SARQLLPASATSPNQENAHLPGGDQSTHKSAPIGGG), 780–835 (AHSG…ALPP), 979–1058 (DLET…GGSK), 1143–1170 (EPNGNGAALGGGGDSGGGVGGGGGGGGV), and 1295–1325 (RGGHFPGGGSGGNGNGNNRNQRGGNHRNRNI). Ser-524 bears the Phosphoserine mark. The span at 594-606 (PQTQAELESSTPP) shows a compositional bias: polar residues. Position 604 is a phosphothreonine (Thr-604). The segment covering 644-668 (PLDDDRDDDEQLIIDDGNDSTAEED) has biased composition (acidic residues). Residue Ser-663 is modified to Phosphoserine. A Phosphothreonine modification is found at Thr-664. Positions 710–726 (SARQLLPASATSPNQEN) are enriched in polar residues. The span at 790–800 (SNENSNSNSHS) shows a compositional bias: low complexity. Positions 1003-1015 (SVPPPSMRVPPPN) are enriched in pro residues. Basic and acidic residues predominate over residues 1021–1033 (PTVRTDPRRDPRR). A compositionally biased stretch (low complexity) spans 1042–1056 (GASTANTTAPNASGG). Composition is skewed to gly residues over residues 1149–1170 (AALGGGGDSGGGVGGGGGGGGV) and 1295–1309 (RGGHFPGGGSGGNGN).

It belongs to the suppressor of sable family. Interacts with Wdr82.

It is found in the nucleus. It localises to the chromosome. Its function is as follows. RNA-binding protein that suppresses transcription of some RNAs. Together with Wdr82, part of a transcription termination checkpoint that promotes transcription termination of RNAs and their subsequent degradation by the nuclear exosome. Promotes transcription termination of aberrant RNAs, transcripts from genes containing a transposon inserted at their very 5' end or RNAs from heat-shock-inducible repetitive element. Binds RNA preferentially at a sequence that resembles a cryptic 5'-splice site. This Drosophila melanogaster (Fruit fly) protein is Protein suppressor of sable.